A 172-amino-acid chain; its full sequence is Transcription factor E (172 aa).

One can recognise an HTH TFE/IIEalpha-type domain in the interval 8–90; the sequence is DDPVVQKYLH…LWTFQYENVP (83 aa).

The protein belongs to the TFE family. In terms of assembly, monomer. Interaction with RNA polymerase subunits RpoF and RpoE is necessary for Tfe stimulatory transcription activity. Able to interact with Tbp and RNA polymerase in the absence of DNA promoter. Interacts both with the preinitiation and elongation complexes.

In terms of biological role, transcription factor that plays a role in the activation of archaeal genes transcribed by RNA polymerase. Facilitates transcription initiation by enhancing TATA-box recognition by TATA-box-binding protein (Tbp), and transcription factor B (Tfb) and RNA polymerase recruitment. Not absolutely required for transcription in vitro, but particularly important in cases where Tbp or Tfb function is not optimal. It dynamically alters the nucleic acid-binding properties of RNA polymerases by stabilizing the initiation complex and destabilizing elongation complexes. Seems to translocate with the RNA polymerase following initiation and acts by binding to the non template strand of the transcription bubble in elongation complexes. The chain is Transcription factor E from Halobacterium salinarum (strain ATCC 700922 / JCM 11081 / NRC-1) (Halobacterium halobium).